We begin with the raw amino-acid sequence, 95 residues long: YcgL domain-containing protein Sden_1630 (95 aa).

The region spanning 1 to 85 is the YcgL domain; sequence MICTVYKSRR…PKANLLEEHK (85 aa).

This is YcgL domain-containing protein Sden_1630 from Shewanella denitrificans (strain OS217 / ATCC BAA-1090 / DSM 15013).